A 361-amino-acid chain; its full sequence is Holliday junction branch migration complex subunit RuvB (361 aa).

A disordered region spans residues 1-21; that stretch reads MHKDEDQRLLGAVPLPNDPDR. The segment at 1 to 184 is large ATPase domain (RuvB-L); the sequence is MHKDEDQRLL…FGIPIRLNFY (184 aa). ATP-binding positions include L23, R24, G65, K68, T69, T70, 131 to 133, R174, Y184, and R221; that span reads EDY. T69 is a Mg(2+) binding site. The interval 185 to 255 is small ATPAse domain (RuvB-S); sequence TIEELEYIVQ…IADEALSRLE (71 aa). The tract at residues 258 to 361 is head domain (RuvB-H); sequence HLGLDPLDRR…QTVLWDEADD (104 aa). Residues R294, R313, and R318 each coordinate DNA.

It belongs to the RuvB family. Homohexamer. Forms an RuvA(8)-RuvB(12)-Holliday junction (HJ) complex. HJ DNA is sandwiched between 2 RuvA tetramers; dsDNA enters through RuvA and exits via RuvB. An RuvB hexamer assembles on each DNA strand where it exits the tetramer. Each RuvB hexamer is contacted by two RuvA subunits (via domain III) on 2 adjacent RuvB subunits; this complex drives branch migration. In the full resolvosome a probable DNA-RuvA(4)-RuvB(12)-RuvC(2) complex forms which resolves the HJ.

The protein localises to the cytoplasm. The enzyme catalyses ATP + H2O = ADP + phosphate + H(+). The RuvA-RuvB-RuvC complex processes Holliday junction (HJ) DNA during genetic recombination and DNA repair, while the RuvA-RuvB complex plays an important role in the rescue of blocked DNA replication forks via replication fork reversal (RFR). RuvA specifically binds to HJ cruciform DNA, conferring on it an open structure. The RuvB hexamer acts as an ATP-dependent pump, pulling dsDNA into and through the RuvAB complex. RuvB forms 2 homohexamers on either side of HJ DNA bound by 1 or 2 RuvA tetramers; 4 subunits per hexamer contact DNA at a time. Coordinated motions by a converter formed by DNA-disengaged RuvB subunits stimulates ATP hydrolysis and nucleotide exchange. Immobilization of the converter enables RuvB to convert the ATP-contained energy into a lever motion, pulling 2 nucleotides of DNA out of the RuvA tetramer per ATP hydrolyzed, thus driving DNA branch migration. The RuvB motors rotate together with the DNA substrate, which together with the progressing nucleotide cycle form the mechanistic basis for DNA recombination by continuous HJ branch migration. Branch migration allows RuvC to scan DNA until it finds its consensus sequence, where it cleaves and resolves cruciform DNA. This Bartonella henselae (strain ATCC 49882 / DSM 28221 / CCUG 30454 / Houston 1) (Rochalimaea henselae) protein is Holliday junction branch migration complex subunit RuvB.